The primary structure comprises 378 residues: Actin-related protein 2/3 complex subunit 1A (378 aa).

WD repeat units lie at residues 8–47 (RFAE…HWER), 53–92 (KHDQ…WVPT), 97–138 (RLNR…WVSK), 143–182 (RHES…VDTK), 203–242 (LSYS…PLAQ), 257–295 (ISEK…KAAS), and 331–375 (VHDN…QELG).

The protein belongs to the WD repeat ARPC1 family. As to quaternary structure, component of the Arp2/3 complex composed of ARP2, ARP3, ARPC1/p41-ARC, ARPC2/p34-ARC, ARPC3/p21-ARC, ARPC4/p20-ARC and ARPC5/p16-ARC. As to expression, expressed at low levels in all tissues with a relatively highest expression in inflorescences.

It localises to the cytoplasm. The protein localises to the cytoskeleton. In terms of biological role, functions as a component of the Arp2/3 complex which is involved in regulation of actin polymerization and together with an activating nucleation-promoting factor (NPF) mediates the formation of branched actin networks. Arp2/3 complex plays a critical role in the control of cell morphogenesis via the modulation of cell polarity development. The protein is Actin-related protein 2/3 complex subunit 1A (ARPC1A) of Arabidopsis thaliana (Mouse-ear cress).